Here is a 299-residue protein sequence, read N- to C-terminus: 33 kDa chaperonin (299 aa).

2 disulfide bridges follow: Cys-234-Cys-236 and Cys-268-Cys-271.

It belongs to the HSP33 family. Post-translationally, under oxidizing conditions two disulfide bonds are formed involving the reactive cysteines. Under reducing conditions zinc is bound to the reactive cysteines and the protein is inactive.

The protein localises to the cytoplasm. Functionally, redox regulated molecular chaperone. Protects both thermally unfolding and oxidatively damaged proteins from irreversible aggregation. Plays an important role in the bacterial defense system toward oxidative stress. The polypeptide is 33 kDa chaperonin (Pseudomonas putida (strain GB-1)).